The chain runs to 503 residues: ATP synthase subunit alpha (503 aa).

ATP is bound at residue 170-177 (GDKQTGKT).

It belongs to the ATPase alpha/beta chains family. As to quaternary structure, F-type ATPases have 2 components, CF(1) - the catalytic core - and CF(0) - the membrane proton channel. CF(1) has five subunits: alpha(3), beta(3), gamma(1), delta(1), epsilon(1). CF(0) has three main subunits: a(1), b(2) and c(9-12). The alpha and beta chains form an alternating ring which encloses part of the gamma chain. CF(1) is attached to CF(0) by a central stalk formed by the gamma and epsilon chains, while a peripheral stalk is formed by the delta and b chains.

Its subcellular location is the cell inner membrane. It carries out the reaction ATP + H2O + 4 H(+)(in) = ADP + phosphate + 5 H(+)(out). In terms of biological role, produces ATP from ADP in the presence of a proton gradient across the membrane. The alpha chain is a regulatory subunit. This Helicobacter pylori (strain P12) protein is ATP synthase subunit alpha.